A 53-amino-acid chain; its full sequence is Bowman-Birk type proteinase inhibitor 1 (53 aa).

5 disulfides stabilise this stretch: cysteine 9-cysteine 24, cysteine 12-cysteine 51, cysteine 14-cysteine 22, cysteine 31-cysteine 38, and cysteine 40-cysteine 48.

Dimer.

Functionally, inhibits trypsin (IC(50)=6.20 nM), neutrophil elastase (ELANE) and, to a lesser extent, alpha-chymotrypsin (IC(50)=3.44 uM). The protein is Bowman-Birk type proteinase inhibitor 1 of Lathyrus sativus (White vetchling).